The following is a 155-amino-acid chain: S-ribosylhomocysteine lyase (155 aa).

Fe cation-binding residues include H58, H62, and C125.

It belongs to the LuxS family. Homodimer. Requires Fe cation as cofactor.

The enzyme catalyses S-(5-deoxy-D-ribos-5-yl)-L-homocysteine = (S)-4,5-dihydroxypentane-2,3-dione + L-homocysteine. Its function is as follows. Involved in the synthesis of autoinducer 2 (AI-2) which is secreted by bacteria and is used to communicate both the cell density and the metabolic potential of the environment. The regulation of gene expression in response to changes in cell density is called quorum sensing. Catalyzes the transformation of S-ribosylhomocysteine (RHC) to homocysteine (HC) and 4,5-dihydroxy-2,3-pentadione (DPD). The protein is S-ribosylhomocysteine lyase of Helicobacter pylori (strain HPAG1).